We begin with the raw amino-acid sequence, 503 residues long: Splicing factor 3A subunit 3 (503 aa).

Disordered regions lie at residues 296–317 (PALMAKKPSAKTASAQSREHER) and 341–384 (ATKE…NPKN). Positions 358-377 (DDSDVEASESDNEDDPDADD) are enriched in acidic residues. A phosphoserine mark is found at Ser-360, Ser-365, and Ser-367. The segment at 408–439 (YNCEICGNFTYKGPKAFQRHFAEWRHAHGMRC) adopts a Matrin-type zinc-finger fold.

Belongs to the SF3A3 family. Probable component of a the U2 small nuclear ribonucleoproteins complex (U2 snRNP). In terms of tissue distribution, ubiquitous. In ovaries and testes, it is expressed in all germ and somatic cells. Highly expressed in spermatogonias and spermatocytes. Highly expressed in the germ cells of larval testes, while it is weakly expressed in fat body cells, in polyploid nuclei of salivary glands, and in larval brain.

The protein localises to the nucleus. Its function is as follows. Probable subunit of a splicing factor complex required for 'A' complex assembly formed by the stable binding of U2 snRNP to the branchpoint sequence (BPS) in pre-mRNA. Involved in male fertility. This is Splicing factor 3A subunit 3 (noi) from Drosophila melanogaster (Fruit fly).